A 158-amino-acid chain; its full sequence is Cyclic pyranopterin monophosphate synthase (158 aa).

Substrate contacts are provided by residues 74-76 (MCH) and 112-113 (ME). Asp127 is an active-site residue.

The protein belongs to the MoaC family. Homohexamer; trimer of dimers.

The catalysed reaction is (8S)-3',8-cyclo-7,8-dihydroguanosine 5'-triphosphate = cyclic pyranopterin phosphate + diphosphate. The protein operates within cofactor biosynthesis; molybdopterin biosynthesis. Catalyzes the conversion of (8S)-3',8-cyclo-7,8-dihydroguanosine 5'-triphosphate to cyclic pyranopterin monophosphate (cPMP). The protein is Cyclic pyranopterin monophosphate synthase of Thermoanaerobacter pseudethanolicus (strain ATCC 33223 / 39E) (Clostridium thermohydrosulfuricum).